Consider the following 456-residue polypeptide: MKKITTYQNKKVLVLGLAKSGVSAAKLLHELGALVTVNDAKQFDQNPDAQDLLTLGIRVVTGGHPIELLDEEFELIVKNPGIPYTNPLVAEALTRKIPIITEVELAGQIAECPIVGITGTNGKTTTTTMIGLLLNADRTAGEARLAGNIGFPASTVAQEATAKDNLVMELSSFQLMGIETFHPQIAVITNIFEAHLDYHGSRKEYVAAKWAIQKNMTAEDTLILNWNQVELQTLAKTTAANVLPFSTKEAVEGAYLLDGKLYFNEEYIMPADELGIPGSHNIENALAAICVAKLKNVSNAQIRQTLTNFSGVPHRTQFVGEVQQRRFYNDSKATNILATEMALSGFDNQKLLLLAGGLDRGNSFDELVPALLGLKAIVLFGETKEKLAEAAKKANIETILFAENVQTAVTIAFDYSEKDDTILLSPACASWDQYPNFEVRGEAFMQAVQQLKESEM.

119-125 is an ATP binding site; that stretch reads GTNGKTT.

The protein belongs to the MurCDEF family.

The protein localises to the cytoplasm. The catalysed reaction is UDP-N-acetyl-alpha-D-muramoyl-L-alanine + D-glutamate + ATP = UDP-N-acetyl-alpha-D-muramoyl-L-alanyl-D-glutamate + ADP + phosphate + H(+). It functions in the pathway cell wall biogenesis; peptidoglycan biosynthesis. Functionally, cell wall formation. Catalyzes the addition of glutamate to the nucleotide precursor UDP-N-acetylmuramoyl-L-alanine (UMA). This Enterococcus faecalis (strain ATCC 700802 / V583) protein is UDP-N-acetylmuramoylalanine--D-glutamate ligase (murD).